Consider the following 482-residue polypeptide: CBL-interacting serine/threonine-protein kinase 23 (482 aa).

A compositionally biased stretch (low complexity) spans M1 to R25. The disordered stretch occupies residues M1–G29. In terms of domain architecture, Protein kinase spans Y31–F286. ATP is bound by residues L37 to V45 and K60. The active-site Proton acceptor is D154. Residues D172 to E201 form an activation loop region. S176 carries the post-translational modification Phosphoserine. Position 190 is a phosphothreonine (T190). An NAF domain is found at K328–E352. Positions K359–V388 are PPI. The disordered stretch occupies residues K459–T482.

Belongs to the protein kinase superfamily. CAMK Ser/Thr protein kinase family. SNF1 subfamily. Part of a K(+)-channel calcium-sensing kinase/phosphatase complex composed by a calcium sensor CBL (CBL1, CBL2, CBL3 or CBL9), a kinase CIPK (CIPK6, CIPK16 or CIPK23), a phosphatase PP2C (AIP1) and a K(+)-channel (AKT1). Interacts with AKT1, CBL1, CBL2, CBL3, CBL5, CBL8, CBL9 and NRT1.1. It depends on Mn(2+) as a cofactor. Post-translationally, autophosphorylated. In seedlings, mostly in vascular bundles, and in roots, especially in cortex and endodermis cells. In adult plants, mostly expressed in flowers, and, to a lower extent, in roots, leaves, stems and siliques, particularly in vascular tissues. Also detected in guard cells and root hairs.

The protein resides in the cell membrane. The catalysed reaction is L-seryl-[protein] + ATP = O-phospho-L-seryl-[protein] + ADP + H(+). The enzyme catalyses L-threonyl-[protein] + ATP = O-phospho-L-threonyl-[protein] + ADP + H(+). Its function is as follows. CIPK serine-threonine protein kinases interact with CBL proteins. Binding of a CBL protein to the regulatory NAF domain of CIPK protein leads to activation of the kinase in a calcium-dependent manner. Downstream of CBL1, CBL2, CBL3 and CBL9, regulates by phosphorylation the K(+) conductance and uptake of AKT1 in low K(+) condition, in response to calcium signaling and during the stomatal opening regulation by monitoring the turgor pressure in guard cells. In response to low nitrate concentration, phosphorylates NRT1.1, switching it from a low-affinity nitrate transporter to a high-affinity transporter. Confers tolerance to low potassium conditions. Involved in drought sensitivity and leaf transpiration. In Arabidopsis thaliana (Mouse-ear cress), this protein is CBL-interacting serine/threonine-protein kinase 23 (CIPK23).